Here is a 548-residue protein sequence, read N- to C-terminus: Chaperonin GroEL (548 aa).

Residues threonine 30 to proline 33, lysine 51, aspartate 87 to threonine 91, glycine 415, asparagine 479 to alanine 481, and aspartate 495 contribute to the ATP site. Residues proline 525–methionine 548 form a disordered region. A compositionally biased stretch (gly residues) spans glycine 539–methionine 548.

The protein belongs to the chaperonin (HSP60) family. Forms a cylinder of 14 subunits composed of two heptameric rings stacked back-to-back. Interacts with the co-chaperonin GroES.

Its subcellular location is the cytoplasm. The catalysed reaction is ATP + H2O + a folded polypeptide = ADP + phosphate + an unfolded polypeptide.. Its function is as follows. Together with its co-chaperonin GroES, plays an essential role in assisting protein folding. The GroEL-GroES system forms a nano-cage that allows encapsulation of the non-native substrate proteins and provides a physical environment optimized to promote and accelerate protein folding. The polypeptide is Chaperonin GroEL (Buchnera aphidicola subsp. Rhopalosiphum padi).